We begin with the raw amino-acid sequence, 544 residues long: Probable protein kinase UbiB (544 aa).

One can recognise a Protein kinase domain in the interval 123-501 (DFDIKPLASA…KRQQAKGQFL (379 aa)). ATP is bound by residues 129–137 (LASASIAQV) and lysine 152. Aspartate 287 functions as the Proton acceptor in the catalytic mechanism. A helical transmembrane segment spans residues 515–537 (LLTSNITVLASISAATGAAFWLF).

This sequence belongs to the ABC1 family. UbiB subfamily.

Its subcellular location is the cell inner membrane. The protein operates within cofactor biosynthesis; ubiquinone biosynthesis [regulation]. Functionally, is probably a protein kinase regulator of UbiI activity which is involved in aerobic coenzyme Q (ubiquinone) biosynthesis. In Aliivibrio fischeri (strain MJ11) (Vibrio fischeri), this protein is Probable protein kinase UbiB.